A 168-amino-acid chain; its full sequence is Lipoprotein signal peptidase (168 aa).

Transmembrane regions (helical) follow at residues 15-35 (AIAA…LGLL), 69-89 (WGRW…AVWV), and 95-115 (PLLA…NLID). Catalysis depends on residues Asp-124 and Asp-141. Residues 133–153 (FPWVFNIADSGISVGVALLLL) form a helical membrane-spanning segment.

This sequence belongs to the peptidase A8 family.

Its subcellular location is the cell inner membrane. The enzyme catalyses Release of signal peptides from bacterial membrane prolipoproteins. Hydrolyzes -Xaa-Yaa-Zaa-|-(S,diacylglyceryl)Cys-, in which Xaa is hydrophobic (preferably Leu), and Yaa (Ala or Ser) and Zaa (Gly or Ala) have small, neutral side chains.. The protein operates within protein modification; lipoprotein biosynthesis (signal peptide cleavage). Its function is as follows. This protein specifically catalyzes the removal of signal peptides from prolipoproteins. The protein is Lipoprotein signal peptidase of Caulobacter vibrioides (strain ATCC 19089 / CIP 103742 / CB 15) (Caulobacter crescentus).